The following is a 35-amino-acid chain: Beta/omega-theraphotoxin-Bp1a (35 aa).

Intrachain disulfides connect C2–C16, C9–C21, and C15–C28.

This sequence belongs to the neurotoxin 10 (Hwtx-1) family. 54 (ProTx-1) subfamily. An unnatural amidation at Ser-35 provokes a 14-fold increased toxin ability to inhibit Nav1.2/SCN2A and a ~2-fold decreased toxin ability to inhibit both Nav1.5/SCN5A and Nav1.7/SCN9A. Expressed by the venom gland.

It localises to the secreted. Functionally, ion channel impairing toxin that inhibits voltage-gated calcium channel Cav3.1/CACNA1G (IC(50)=53 nM), voltage-gated potassium channels Kv2.1/KCNB1 (IC(50)=411 nM), all sodium channels tested (Nav1.2/SCN2A (IC(50)=60-104 nM), Nav1.5/SCN5A (IC(50)=76-358 nM), Nav1.6/SCN8A (IC(50)=21-133 nM), Nav1.7/SCN9A (IC(50)=51-95 nM), and Nav1.8/SCN10A) as well as the nociceptor cation channel TRPA1 (IC(50)=389 nM). Acts as a potent and selective blocker of voltage-gated calcium channel Cav3.1/CACNA1G, but not of Cav3.2/CACNA1H, and Cav3.3/CACNA1I. On Nav1.7/SCN9A, primarily interacts with the DII and DIV voltage-sensor domains. Also acts as an inhibitor of nociceptor cation channel TRPA1 (IC(50)~389 nM) by binding to the S1-S4 gating domain of TRPA1. It shows moderate affinity for lipid bilayers. This chain is Beta/omega-theraphotoxin-Bp1a, found in Bumba pulcherrimaklaasi (Tarantula spider).